The sequence spans 468 residues: Chromosomal replication initiator protein DnaA (468 aa).

The tract at residues 1 to 84 (MSSSLWLQCL…RFEVGSRRVA (84 aa)) is domain I, interacts with DnaA modulators. The tract at residues 84 to 131 (AAPKPAPTRTPADVAAESSAPAQLQARKPVHKTWDDDAQVIADINHRS) is domain II. Residues 85 to 95 (APKPAPTRTPA) are compositionally biased toward low complexity. The disordered stretch occupies residues 85 to 104 (APKPAPTRTPADVAAESSAP). Positions 132–348 (NVNPKHKFNN…GALNRVIANA (217 aa)) are domain III, AAA+ region. Positions 176, 178, 179, and 180 each coordinate ATP. The segment at 349–468 (NFTGRPITID…YSNLIRTLSS (120 aa)) is domain IV, binds dsDNA.

It belongs to the DnaA family. In terms of assembly, oligomerizes as a right-handed, spiral filament on DNA at oriC.

The protein localises to the cytoplasm. Plays an essential role in the initiation and regulation of chromosomal replication. ATP-DnaA binds to the origin of replication (oriC) to initiate formation of the DNA replication initiation complex once per cell cycle. Binds the DnaA box (a 9 base pair repeat at the origin) and separates the double-stranded (ds)DNA. Forms a right-handed helical filament on oriC DNA; dsDNA binds to the exterior of the filament while single-stranded (ss)DNA is stabiized in the filament's interior. The ATP-DnaA-oriC complex binds and stabilizes one strand of the AT-rich DNA unwinding element (DUE), permitting loading of DNA polymerase. After initiation quickly degrades to an ADP-DnaA complex that is not apt for DNA replication. Binds acidic phospholipids. In terms of biological role, complements a temperature-sensitive E.coli mutant, the DnaA consensus is 5'-TT(A/T)TNCACA-3'. The chain is Chromosomal replication initiator protein DnaA from Vibrio harveyi (Beneckea harveyi).